The chain runs to 322 residues: tRNA dimethylallyltransferase (322 aa).

19 to 26 contributes to the ATP binding site; sequence GPTASGKT. 21–26 contributes to the substrate binding site; it reads TASGKT. Interaction with substrate tRNA stretches follow at residues 44-47, 168-172, and 255-260; these read DSAL, QRIQR, and RCVGYR.

This sequence belongs to the IPP transferase family. Monomer. It depends on Mg(2+) as a cofactor.

The enzyme catalyses adenosine(37) in tRNA + dimethylallyl diphosphate = N(6)-dimethylallyladenosine(37) in tRNA + diphosphate. In terms of biological role, catalyzes the transfer of a dimethylallyl group onto the adenine at position 37 in tRNAs that read codons beginning with uridine, leading to the formation of N6-(dimethylallyl)adenosine (i(6)A). This is tRNA dimethylallyltransferase from Cupriavidus taiwanensis (strain DSM 17343 / BCRC 17206 / CCUG 44338 / CIP 107171 / LMG 19424 / R1) (Ralstonia taiwanensis (strain LMG 19424)).